A 438-amino-acid chain; its full sequence is Aspartate aminotransferase, cytoplasmic (438 aa).

Residues G73, W167, and N220 each coordinate L-aspartate. K284 carries the post-translational modification N6-(pyridoxal phosphate)lysine. L-aspartate is bound at residue R412.

It belongs to the class-I pyridoxal-phosphate-dependent aminotransferase family. In terms of assembly, homodimer. It depends on pyridoxal 5'-phosphate as a cofactor.

Its subcellular location is the cytoplasm. The enzyme catalyses L-aspartate + 2-oxoglutarate = oxaloacetate + L-glutamate. Plays a key role in amino acid metabolism. The chain is Aspartate aminotransferase, cytoplasmic (aatB) from Dictyostelium discoideum (Social amoeba).